Here is a 124-residue protein sequence, read N- to C-terminus: Small ribosomal subunit protein bS16 (124 aa).

Over residues 81 to 90 (LKKRPARNNP) the composition is skewed to basic residues. A disordered region spans residues 81–124 (LKKRPARNNPHKGEPGKKAQERIAAAKQAAEDAAAAAEADSASE). The span at 91–101 (HKGEPGKKAQE) shows a compositional bias: basic and acidic residues. Over residues 102 to 124 (RIAAAKQAAEDAAAAAEADSASE) the composition is skewed to low complexity.

Belongs to the bacterial ribosomal protein bS16 family.

This chain is Small ribosomal subunit protein bS16, found in Bartonella tribocorum (strain CIP 105476 / IBS 506).